Reading from the N-terminus, the 343-residue chain is Uroporphyrinogen decarboxylase (343 aa).

Substrate contacts are provided by residues R23 to R27, D73, Y150, S205, and H322.

The protein belongs to the uroporphyrinogen decarboxylase family. Homodimer.

The protein localises to the cytoplasm. It carries out the reaction uroporphyrinogen III + 4 H(+) = coproporphyrinogen III + 4 CO2. The protein operates within porphyrin-containing compound metabolism; protoporphyrin-IX biosynthesis; coproporphyrinogen-III from 5-aminolevulinate: step 4/4. Functionally, catalyzes the decarboxylation of four acetate groups of uroporphyrinogen-III to yield coproporphyrinogen-III. The sequence is that of Uroporphyrinogen decarboxylase from Cereibacter sphaeroides (strain ATCC 17025 / ATH 2.4.3) (Rhodobacter sphaeroides).